Consider the following 128-residue polypeptide: Sulfurtransferase TusD (128 aa).

The active-site Cysteine persulfide intermediate is C78.

This sequence belongs to the DsrE/TusD family. In terms of assembly, heterohexamer, formed by a dimer of trimers. The hexameric TusBCD complex contains 2 copies each of TusB, TusC and TusD. The TusBCD complex interacts with TusE.

The protein localises to the cytoplasm. Functionally, part of a sulfur-relay system required for 2-thiolation of 5-methylaminomethyl-2-thiouridine (mnm(5)s(2)U) at tRNA wobble positions. Accepts sulfur from TusA and transfers it in turn to TusE. This is Sulfurtransferase TusD from Shigella dysenteriae serotype 1 (strain Sd197).